A 113-amino-acid polypeptide reads, in one-letter code: MPPVLWRGWIPFCRCTEEKKVRNKQVVLLIAGISGIVTGIIVSLNIPFIRQGLFYPASPVEIVVSLSLTFSVSVVFFVGAIVGWISVSEIYYSRMTGLNESSEISEGTYNERK.

The polypeptide is Protein TrbJ (trbJ) (Escherichia coli (strain K12)).